The chain runs to 381 residues: MLEILWANITPIQTFVSSNHLTMLYGLKRFGCRLYHHSKSTRYIDATAKVVSQEPAAISSTGAIPLNSPAAPLLSQDVLIVERQLEMMNVFLGYEQANRYVILNQQGQHLGYIAEQGASSILSSLSRQFFHTHRAFKADVMDSNGQLVLQLNRPFSWINSRLQIHSIDYSKFSSTLVGEVLQKWHLWRRRYELFLAKRSMFEQFAKIDERVLSWEFLLRNEQDRILGSVSRNFMGLPREFFTDTGNYVLRFTSTSAANGSVNENQLLQAAHGIANDVCARDMSLEERAVMLGSAVTIDFDYFSRIHGGPALGLNIPFMFGGSSSNHDYPAEDLSAQEILKNDQETTPSTNDSSSETKSPFLSDADLDQQDFWDIFDRDGDD.

A disordered region spans residues 336 to 369; that stretch reads QEILKNDQETTPSTNDSSSETKSPFLSDADLDQQ. The segment covering 344-359 has biased composition (polar residues); it reads ETTPSTNDSSSETKSP.

Belongs to the phospholipid scramblase family.

The protein resides in the mitochondrion. The protein is Phospholipid scramblase family protein C343.06c of Schizosaccharomyces pombe (strain 972 / ATCC 24843) (Fission yeast).